Consider the following 94-residue polypeptide: Small ribosomal subunit protein uS17 (94 aa).

It belongs to the universal ribosomal protein uS17 family. In terms of assembly, part of the 30S ribosomal subunit.

In terms of biological role, one of the primary rRNA binding proteins, it binds specifically to the 5'-end of 16S ribosomal RNA. This Streptomyces griseus subsp. griseus (strain JCM 4626 / CBS 651.72 / NBRC 13350 / KCC S-0626 / ISP 5235) protein is Small ribosomal subunit protein uS17.